We begin with the raw amino-acid sequence, 312 residues long: Golgi to ER traffic protein 2 (312 aa).

Residues 1–175 (MSDSPSISAE…VQYNTYRHQV (175 aa)) lie on the Cytoplasmic side of the membrane. The chain crosses the membrane as a helical span at residues 176–196 (WKFRFLAVRYFALLANFIYHF). Over 197-224 (YIIGDSISFASSSHQFIRELIPVEPARS) the chain is Lumenal. The helical transmembrane segment at 225–244 (FFTLFSTIEVVIIASYYFLG) threads the bilayer. Residues 245–288 (TKEGFFSTATSNNFVVKLLDMGSMVLPQLQQFKTIAVRLLGYYE) lie on the Cytoplasmic side of the membrane. Residues 289 to 309 (LLAVLLGDLSLVVVLFGLHSV) traverse the membrane as a helical segment. The Lumenal portion of the chain corresponds to 310–312 (LGN).

It belongs to the GET2 family. As to quaternary structure, component of the Golgi to ER traffic (GET) complex, which is composed of GET1, GET2 and GET3. Within the complex, GET1 and GET2 form a heterotetramer which is stabilized by phosphatidylinositol binding and which binds to the GET3 homodimer.

The protein resides in the endoplasmic reticulum membrane. The protein localises to the golgi apparatus membrane. Its function is as follows. Required for the post-translational delivery of tail-anchored (TA) proteins to the endoplasmic reticulum. Together with GET1, acts as a membrane receptor for soluble GET3, which recognizes and selectively binds the transmembrane domain of TA proteins in the cytosol. The GET complex cooperates with the HDEL receptor ERD2 to mediate the ATP-dependent retrieval of resident ER proteins that contain a C-terminal H-D-E-L retention signal from the Golgi to the ER. In Scheffersomyces stipitis (strain ATCC 58785 / CBS 6054 / NBRC 10063 / NRRL Y-11545) (Yeast), this protein is Golgi to ER traffic protein 2.